Here is a 138-residue protein sequence, read N- to C-terminus: uncharacterized protein (138 aa).

The signal sequence occupies residues 1-37 (MNSTFTSQPLLNRSEPRVFKEFYRLVIGCNPAWQVMA).

It to H.influenzae HI_1631.

This is an uncharacterized protein from Sinorhizobium fredii (strain NBRC 101917 / NGR234).